Here is a 313-residue protein sequence, read N- to C-terminus: Biotin synthase (313 aa).

The region spanning 37–263 (YYGKKVKLNM…INPTKEIRIA (227 aa)) is the Radical SAM core domain. The [4Fe-4S] cluster site is built by Cys55, Cys59, and Cys62. [2Fe-2S] cluster contacts are provided by Cys98, Cys131, Cys191, and Arg261.

This sequence belongs to the radical SAM superfamily. Biotin synthase family. As to quaternary structure, homodimer. The cofactor is [4Fe-4S] cluster. It depends on [2Fe-2S] cluster as a cofactor.

It catalyses the reaction (4R,5S)-dethiobiotin + (sulfur carrier)-SH + 2 reduced [2Fe-2S]-[ferredoxin] + 2 S-adenosyl-L-methionine = (sulfur carrier)-H + biotin + 2 5'-deoxyadenosine + 2 L-methionine + 2 oxidized [2Fe-2S]-[ferredoxin]. It participates in cofactor biosynthesis; biotin biosynthesis; biotin from 7,8-diaminononanoate: step 2/2. Its function is as follows. Catalyzes the conversion of dethiobiotin (DTB) to biotin by the insertion of a sulfur atom into dethiobiotin via a radical-based mechanism. In Staphylococcus epidermidis (strain ATCC 12228 / FDA PCI 1200), this protein is Biotin synthase.